The chain runs to 400 residues: Bifunctional arginine demethylase and lysyl-hydroxylase psr-1 (400 aa).

One can recognise a JmjC domain in the interval 146–310 (RKTKKLSEDY…LVWPKTVKGR (165 aa)). A substrate-binding site is contributed by Thr-189. Fe cation contacts are provided by His-192 and Asp-194. Position 202 (Asn-202) interacts with 2-oxoglutarate. Lys-209 lines the substrate pocket. Position 278 (His-278) interacts with Fe cation. Thr-290 lines the 2-oxoglutarate pocket. Residues 342–400 (DMNESSSDSSSSSSSSDDSSDESDCDDSGRCGGRKRKNDDRSNECPEKMSTTYFQNSLV) are disordered. Residues 346–358 (SSSDSSSSSSSSD) show a composition bias toward low complexity. Basic and acidic residues predominate over residues 378-388 (KNDDRSNECPE). Residues 390 to 400 (MSTTYFQNSLV) show a composition bias toward polar residues.

Belongs to the JMJD6 family. As to quaternary structure, interacts with ced-5 and ced-12. Fe(2+) serves as cofactor.

The protein localises to the nucleus. In terms of biological role, dioxygenase that can both act as a histone arginine demethylase and a lysyl-hydroxylase. In Caenorhabditis elegans, this protein is Bifunctional arginine demethylase and lysyl-hydroxylase psr-1 (psr-1).